Here is a 312-residue protein sequence, read N- to C-terminus: Ribosomal RNA small subunit methyltransferase H (312 aa).

Residues 32-34 (AGH), aspartate 52, phenylalanine 79, aspartate 100, and glutamine 107 contribute to the S-adenosyl-L-methionine site.

Belongs to the methyltransferase superfamily. RsmH family.

It localises to the cytoplasm. The enzyme catalyses cytidine(1402) in 16S rRNA + S-adenosyl-L-methionine = N(4)-methylcytidine(1402) in 16S rRNA + S-adenosyl-L-homocysteine + H(+). Specifically methylates the N4 position of cytidine in position 1402 (C1402) of 16S rRNA. This is Ribosomal RNA small subunit methyltransferase H from Listeria monocytogenes serovar 1/2a (strain ATCC BAA-679 / EGD-e).